Here is a 292-residue protein sequence, read N- to C-terminus: Manganese transport system membrane protein MntC (292 aa).

The next 8 membrane-spanning stretches (helical) occupy residues 20-40, 58-78, 96-116, 137-157, 168-188, 190-210, 226-246, and 249-269; these read ALTAAILVGIICGVIGCFIIL, VVIAYMIGASFFIGAVITGVI, SAIGILFTAAFALGIVLITGM, TDLWVTLGIGLFVLLIIILFY, VMAQATGIPVQMIHYLLMLLL, LVTVAALQTVGIVLVVAMLIT, LCLAAMFGVISAIAGIYFSVI, and VASGASIVLVASTLFALAFFF.

It belongs to the ABC-3 integral membrane protein family.

The protein localises to the cell membrane. This protein is probably a component of a manganese permease, a binding protein-dependent, ATP-driven transport system. The protein is Manganese transport system membrane protein MntC (mntC) of Halalkalibacterium halodurans (strain ATCC BAA-125 / DSM 18197 / FERM 7344 / JCM 9153 / C-125) (Bacillus halodurans).